A 2555-amino-acid chain; its full sequence is Plipastatin synthase subunit C (2555 aa).

The interval 7–306 (IQDIYPLSFM…NTIPIRAQSD (300 aa)) is condensation 1. Positions 491–894 (TYAELDMYAS…SIEGVREAAV (404 aa)) are adenylation 1. The 76-residue stretch at 967-1042 (APRNVTEMKL…GLATVIREGT (76 aa)) folds into the Carrier 1 domain. Ser1002 carries the O-(pantetheine 4'-phosphoryl)serine modification. Residues 1054-1344 (KQETYPVSSA…NTLALRTRPE (291 aa)) are condensation 2. The interval 1532–1927 (TYEDLNSWAN…QIDGVKEAAV (396 aa)) is adenylation 2. Residues 2003-2077 (PPRNELEEQL…DLSPFIRKSE (75 aa)) enclose the Carrier 2 domain. The residue at position 2038 (Ser2038) is an O-(pantetheine 4'-phosphoryl)serine. Positions 2085-2548 (IQGDVPWTPV…SLTAEDLDSI (464 aa)) are epimerization 3.

Belongs to the ATP-dependent AMP-binding enzyme family. The cofactor is pantetheine 4'-phosphate.

Functionally, this protein is a multifunctional enzyme, able to activate and polymerize the amino acids Glu and Ala/Val as part of the biosynthesis of the lipopeptide antibiotic plipastatin. The Ala/Val residue is further epimerized to the D-isomer form. The activation sites for these amino acids consist of individual domains. In Bacillus subtilis (strain 168), this protein is Plipastatin synthase subunit C (ppsC).